Reading from the N-terminus, the 519-residue chain is Exodeoxyribonuclease 7 large subunit (519 aa).

This sequence belongs to the XseA family. Heterooligomer composed of large and small subunits.

It is found in the cytoplasm. It catalyses the reaction Exonucleolytic cleavage in either 5'- to 3'- or 3'- to 5'-direction to yield nucleoside 5'-phosphates.. In terms of biological role, bidirectionally degrades single-stranded DNA into large acid-insoluble oligonucleotides, which are then degraded further into small acid-soluble oligonucleotides. This chain is Exodeoxyribonuclease 7 large subunit, found in Cereibacter sphaeroides (strain ATCC 17025 / ATH 2.4.3) (Rhodobacter sphaeroides).